The following is a 311-amino-acid chain: Beta-lactamase (311 aa).

Residues 1-34 constitute a signal peptide (tat-type signal); that stretch reads MRLTQAPPSRRTLMTLGAGATMAALLPAGGAAYA. The active-site Acyl-ester intermediate is serine 87. 255 to 257 contacts substrate; sequence KTG.

This sequence belongs to the class-A beta-lactamase family. Predicted to be exported by the Tat system. The position of the signal peptide cleavage has not been experimentally proven.

The enzyme catalyses a beta-lactam + H2O = a substituted beta-amino acid. The polypeptide is Beta-lactamase (bla) (Kitasatospora aureofaciens (Streptomyces aureofaciens)).